Reading from the N-terminus, the 249-residue chain is MDPQTNSHQEVQQPSPKETDSQTPSETLYIRNIEEKIRLTMLKRILEHLFGSYGKVIDVQARKTLRMRGQAFVVFDNLENASRALKDLQGYPLYGKPMMIQYSKSKSDIIVQRESPEEIETRKKDRKNRREMLKRTSALQPAAPKPTHKKPVPKRNVGAERKSTINEDLLPPNKVLLLQNIPQEVNADVLTQIFEAFSGFQEVRMVPGRRGIAFVEYDSDREATVAKNGTTGMSLSGNQIKVTFARKAS.

The segment at 1–25 (MDPQTNSHQEVQQPSPKETDSQTPS) is disordered. The RRM 1 domain maps to 26-105 (ETLYIRNIEE…KPMMIQYSKS (80 aa)). Residues 113–157 (RESPEEIETRKKDRKNRREMLKRTSALQPAAPKPTHKKPVPKRNV) form a disordered region. Over residues 114–134 (ESPEEIETRKKDRKNRREMLK) the composition is skewed to basic and acidic residues. The RRM 2 domain maps to 174-247 (KVLLLQNIPQ…NQIKVTFARK (74 aa)).

It belongs to the RRM U1 A/B'' family. As to quaternary structure, component of the spliceosome where it is associated with snRNP U1.

The protein localises to the nucleus. It is found in the nucleolus. Its function is as follows. Involved in nuclear mRNA splicing. The polypeptide is U1 small nuclear ribonucleoprotein usp102 (Schizosaccharomyces pombe (strain 972 / ATCC 24843) (Fission yeast)).